Consider the following 720-residue polypeptide: Methionine--tRNA ligase (720 aa).

A 'HIGH' region motif is present at residues 27–37 (PYANGQIHIGH). The Zn(2+) site is built by cysteine 158, cysteine 161, cysteine 171, and cysteine 174. The short motif at 348-352 (KMSKS) is the 'KMSKS' region element. Lysine 351 provides a ligand contact to ATP. Residues 614–720 (DFAKVDLRIA…SGAKPGMRVK (107 aa)) enclose the tRNA-binding domain.

It belongs to the class-I aminoacyl-tRNA synthetase family. MetG type 1 subfamily. Homodimer. Zn(2+) serves as cofactor.

Its subcellular location is the cytoplasm. It carries out the reaction tRNA(Met) + L-methionine + ATP = L-methionyl-tRNA(Met) + AMP + diphosphate. Its function is as follows. Is required not only for elongation of protein synthesis but also for the initiation of all mRNA translation through initiator tRNA(fMet) aminoacylation. This is Methionine--tRNA ligase from Burkholderia ambifaria (strain MC40-6).